We begin with the raw amino-acid sequence, 1124 residues long: Eukaryotic translation initiation factor 3 subunit A (1124 aa).

Residues 96–124 are a coiled coil; that stretch reads LKMAEERTEQAQQQSSQATVDIDDLDNLA. The region spanning 317-498 is the PCI domain; it reads IQRMTTHVLI…ECVHFGTDLS (182 aa). Composition is skewed to basic and acidic residues over residues 812–851 and 860–883; these read EERR…RQLA and EVER…ERRP. The interval 812–1124 is disordered; sequence EERRRIEEEL…EEGWTDVKHR (313 aa). Over residues 900 to 910 the composition is skewed to low complexity; it reads PAAAAPANPAA. Composition is skewed to basic and acidic residues over residues 928-952, 960-990, 1007-1048, and 1063-1100; these read PRER…EKDG, RGGD…DRGP, PRRD…RGGG, and DDNR…EARP.

This sequence belongs to the eIF-3 subunit A family. Component of the eukaryotic translation initiation factor 3 (eIF-3) complex.

The protein localises to the cytoplasm. In terms of biological role, RNA-binding component of the eukaryotic translation initiation factor 3 (eIF-3) complex, which is involved in protein synthesis of a specialized repertoire of mRNAs and, together with other initiation factors, stimulates binding of mRNA and methionyl-tRNAi to the 40S ribosome. The eIF-3 complex specifically targets and initiates translation of a subset of mRNAs involved in cell proliferation. This chain is Eukaryotic translation initiation factor 3 subunit A, found in Anopheles gambiae (African malaria mosquito).